The primary structure comprises 238 residues: tRNA1(Val) (adenine(37)-N6)-methyltransferase (238 aa).

This sequence belongs to the methyltransferase superfamily. tRNA (adenine-N(6)-)-methyltransferase family.

Its subcellular location is the cytoplasm. It catalyses the reaction adenosine(37) in tRNA1(Val) + S-adenosyl-L-methionine = N(6)-methyladenosine(37) in tRNA1(Val) + S-adenosyl-L-homocysteine + H(+). Functionally, specifically methylates the adenine in position 37 of tRNA(1)(Val) (anticodon cmo5UAC). The sequence is that of tRNA1(Val) (adenine(37)-N6)-methyltransferase from Shewanella putrefaciens (strain CN-32 / ATCC BAA-453).